The following is a 93-amino-acid chain: Co-chaperonin GroES (93 aa).

The protein belongs to the GroES chaperonin family. Heptamer of 7 subunits arranged in a ring. Interacts with the chaperonin GroEL.

The protein localises to the cytoplasm. Its function is as follows. Together with the chaperonin GroEL, plays an essential role in assisting protein folding. The GroEL-GroES system forms a nano-cage that allows encapsulation of the non-native substrate proteins and provides a physical environment optimized to promote and accelerate protein folding. GroES binds to the apical surface of the GroEL ring, thereby capping the opening of the GroEL channel. The polypeptide is Co-chaperonin GroES (Streptococcus intermedius).